The following is a 223-amino-acid chain: Ethylene-inducing xylanase 1 (223 aa).

Positions 1–19 are cleaved as a signal peptide; that stretch reads MVSFTSLLAAFSVVSGVLT. The 190-residue stretch at 34 to 223 folds into the GH11 domain; that stretch reads KRTPSSTGTS…SSGSATMTVS (190 aa). Glutamate 119 functions as the Nucleophile in the catalytic mechanism. Positions 174–184 are nuclear localization signal; sequence RRTKRTSGSVN. The active-site Proton donor is the glutamate 210.

The protein belongs to the glycosyl hydrolase 11 (cellulase G) family.

The protein localises to the secreted. Its subcellular location is the host nucleus. The enzyme catalyses Endohydrolysis of (1-&gt;4)-beta-D-xylosidic linkages in xylans.. Its pathway is glycan degradation; xylan degradation. Functionally, endo-1,4-beta-xylanase involved in the hydrolysis of xylan, a major structural heterogeneous polysaccharide found in plant biomass representing the second most abundant polysaccharide in the biosphere, after cellulose. Acts as an effector that localizes to the host nucleus to contribute to the virulence process. Induces host innate immunity responses; triggers BAK1-and SOBIR1-dependent cell death, salicylic acid signaling and jasmonic acid signaling. Does not exhibit any cell death when transiently expressed in N.benthamiana. The polypeptide is Ethylene-inducing xylanase 1 (Verticillium dahliae (strain VdLs.17 / ATCC MYA-4575 / FGSC 10137) (Verticillium wilt)).